The following is a 98-amino-acid chain: Integration host factor subunit alpha (98 aa).

A compositionally biased stretch (basic and acidic residues) spans 53–69 (DLREKSERPGRNPKTGE). The segment at 53 to 73 (DLREKSERPGRNPKTGEDIPI) is disordered.

Belongs to the bacterial histone-like protein family. As to quaternary structure, heterodimer of an alpha and a beta chain.

This protein is one of the two subunits of integration host factor, a specific DNA-binding protein that functions in genetic recombination as well as in transcriptional and translational control. This chain is Integration host factor subunit alpha, found in Aliivibrio salmonicida (strain LFI1238) (Vibrio salmonicida (strain LFI1238)).